Here is a 252-residue protein sequence, read N- to C-terminus: MKITPVKALTDNYIWMIQHGNHAVCVDPSEPSPVLEFLVRNRLMLAQTWVTHPHPDHEGGAAALWRGYMESPVYGESDIEAATHTVTAGTQFTFGDGQVTVWATPGHTDRHTSYLLETSDGIHVFCGDTLFSAGCGRVFTGTIEQLYDSFQRFNRLPENTLFYPAHEYTAANLRFAAHIEPDNADIQTALKAAAHTPTLPVTLAHERRVNPFLRVDLPHVRDRAEALSGKTLNSSLDTFVALRELKNQYRTK.

H52, H54, D56, H57, H107, D128, and H166 together coordinate Zn(2+).

It belongs to the metallo-beta-lactamase superfamily. Glyoxalase II family. As to quaternary structure, monomer. Zn(2+) serves as cofactor.

The catalysed reaction is an S-(2-hydroxyacyl)glutathione + H2O = a 2-hydroxy carboxylate + glutathione + H(+). Its pathway is secondary metabolite metabolism; methylglyoxal degradation; (R)-lactate from methylglyoxal: step 2/2. Thiolesterase that catalyzes the hydrolysis of S-D-lactoyl-glutathione to form glutathione and D-lactic acid. This is Hydroxyacylglutathione hydrolase from Neisseria meningitidis serogroup C (strain 053442).